Here is a 93-residue protein sequence, read N- to C-terminus: MVINMDFDITVIGYIAGTLTTFASLPQLIKSLKEKDMSNISLAFVITFTTGLTLWLIYGILRNDYPIIVFNILSLMFWIPITYLKIRDEMRKS.

Transmembrane regions (helical) follow at residues 9–29 (ITVI…PQLI), 40–60 (ISLA…IYGI), and 66–86 (PIIV…YLKI).

It localises to the cell membrane. This is an uncharacterized protein from Methanocaldococcus jannaschii (strain ATCC 43067 / DSM 2661 / JAL-1 / JCM 10045 / NBRC 100440) (Methanococcus jannaschii).